Consider the following 313-residue polypeptide: Porphobilinogen deaminase (313 aa).

The residue at position 242 (Cys242) is an S-(dipyrrolylmethanemethyl)cysteine.

Belongs to the HMBS family. In terms of assembly, monomer. It depends on dipyrromethane as a cofactor.

The catalysed reaction is 4 porphobilinogen + H2O = hydroxymethylbilane + 4 NH4(+). The protein operates within porphyrin-containing compound metabolism; protoporphyrin-IX biosynthesis; coproporphyrinogen-III from 5-aminolevulinate: step 2/4. Tetrapolymerization of the monopyrrole PBG into the hydroxymethylbilane pre-uroporphyrinogen in several discrete steps. This is Porphobilinogen deaminase from Pseudomonas putida (strain ATCC 47054 / DSM 6125 / CFBP 8728 / NCIMB 11950 / KT2440).